A 337-amino-acid chain; its full sequence is Glucokinase (337 aa).

11–16 is a binding site for ATP; sequence ADIGGT.

The protein belongs to the bacterial glucokinase family.

It is found in the cytoplasm. The enzyme catalyses D-glucose + ATP = D-glucose 6-phosphate + ADP + H(+). This is Glucokinase from Xylella fastidiosa (strain M23).